We begin with the raw amino-acid sequence, 354 residues long: Uroporphyrinogen decarboxylase (354 aa).

Substrate-binding positions include 27 to 31, aspartate 77, tyrosine 154, serine 209, and histidine 327; that span reads RQAGR.

Belongs to the uroporphyrinogen decarboxylase family. As to quaternary structure, homodimer.

Its subcellular location is the cytoplasm. It catalyses the reaction uroporphyrinogen III + 4 H(+) = coproporphyrinogen III + 4 CO2. Its pathway is porphyrin-containing compound metabolism; protoporphyrin-IX biosynthesis; coproporphyrinogen-III from 5-aminolevulinate: step 4/4. Functionally, catalyzes the decarboxylation of four acetate groups of uroporphyrinogen-III to yield coproporphyrinogen-III. The chain is Uroporphyrinogen decarboxylase from Shewanella amazonensis (strain ATCC BAA-1098 / SB2B).